Consider the following 561-residue polypeptide: Type II methyltransferase M.BstVI (561 aa).

Belongs to the N(4)/N(6)-methyltransferase family.

It carries out the reaction a 2'-deoxyadenosine in DNA + S-adenosyl-L-methionine = an N(6)-methyl-2'-deoxyadenosine in DNA + S-adenosyl-L-homocysteine + H(+). Functionally, a gamma subtype methylase, recognizes the double-stranded sequence 5'-CTCGAG-3', methylates A-5 on both strands, and protects the DNA from cleavage by the BstVI endonuclease. The chain is Type II methyltransferase M.BstVI from Geobacillus stearothermophilus (Bacillus stearothermophilus).